A 345-amino-acid polypeptide reads, in one-letter code: SLAM family member 5 (345 aa).

A signal peptide spans 1-21; that stretch reads MAQHHLWILLLCLQTWPEAAG. The Extracellular segment spans residues 22–225; sequence KDSEIFTVNG…AMGFRTHHTG (204 aa). The 104-residue stretch at 26 to 129 folds into the Ig-like V-type domain; the sequence is IFTVNGILGE…TTKRYNLQIY (104 aa). An Ig-like C2-type domain is found at 135-207; that stretch reads PKITQSLMAS…PVSNNSDSIS (73 aa). N-linked (GlcNAc...) asparagine glycosylation occurs at Asn150. The cysteines at positions 155 and 193 are disulfide-linked. Residues 226-246 form a helical membrane-spanning segment; sequence LLSVLAMFFLLVLILSSVFLF. At 247 to 345 the chain is on the cytoplasmic side; it reads RLFKRRQGRI…PGTSSYEIVI (99 aa). Residues 277–282 carry the ITSM 1 motif; it reads TIYTYI. Phosphotyrosine is present on Tyr279. Tyr296 carries the post-translational modification Phosphotyrosine; by LYN. Residues 314-319 carry the ITSM 2 motif; it reads TVYSEV. Tyr316 carries the post-translational modification Phosphotyrosine. The disordered stretch occupies residues 326 to 345; the sequence is GKASTQDSKPPGTSSYEIVI. A compositionally biased stretch (polar residues) spans 328–345; the sequence is ASTQDSKPPGTSSYEIVI. Residue Tyr341 is modified to Phosphotyrosine; by FES.

Homodimer; via its extracellular domain. Forms a head to tail dimer with a CD48 molecule from another cell. Interacts with SH2 domain-containing proteins SH2D1A/SAP and SH2D1B/EAT-2. Interacts with tyrosine-protein phosphatases PTPN6/SHP-1 and PTPN11//SHP-2 via its phosphorylated cytoplasmic domain, and this interaction is blocked by SH2D1A. Interacts (via phosphorylated ITSM 1 and 2) with INPP5D/SHIP1. Post-translationally, phosphorylated by tyrosine-protein kinase LCK on tyrosine residues following ligation induced by agonist monoclonal antibody. The association with SH2D1A is dependent of tyrosine phosphorylation of its cytoplasmic domain. Phosphorylated on Tyr-296 and Tyr-316 following platelet aggregation. Phosphorylated on tyrosine residues upon high affinity immunoglobulin epsilon receptor aggregation in mast cells. In terms of processing, N-glycosylated. Predominantly expressed in hematopoietic tissues, such as lymph node, spleen and peripheral leukocytes. Expressed in macrophages, B-cells, monocytes, platelets, thymocytes, T-cells and dendritic cells. Highly expressed in memory T-cells. Expressed in mast cells.

The protein localises to the cell membrane. Functionally, self-ligand receptor of the signaling lymphocytic activation molecule (SLAM) family. SLAM receptors triggered by homo- or heterotypic cell-cell interactions are modulating the activation and differentiation of a wide variety of immune cells and thus are involved in the regulation and interconnection of both innate and adaptive immune response. Activities are controlled by presence or absence of small cytoplasmic adapter proteins, SH2D1A/SAP and/or SH2D1B/EAT-2. Can mediate natural killer (NK) cell cytotoxicity dependent on SH2D1A and SH2D1B. Increases proliferative responses of activated T-cells and SH2D1A/SAP does not seem be required for this process. Homophilic interactions enhance interferon gamma/IFNG secretion in lymphocytes and induce platelet stimulation via a SH2D1A-dependent pathway. May serve as a marker for hematopoietic progenitor cells Required for a prolonged T-cell:B-cell contact, optimal T follicular helper function, and germinal center formation. In germinal centers involved in maintaining B-cell tolerance and in preventing autoimmunity. In mast cells negatively regulates high affinity immunoglobulin epsilon receptor signaling; independent of SH2D1A and SH2D1B but implicating FES and PTPN6/SHP-1. In macrophages enhances LPS-induced MAPK phosphorylation and NF-kappaB activation and modulates LPS-induced cytokine secretion; involving ITSM 2. Positively regulates macroautophagy in primary dendritic cells via stabilization of IRF8; inhibits TRIM21-mediated proteasomal degradation of IRF8. The polypeptide is SLAM family member 5 (CD84) (Homo sapiens (Human)).